A 266-amino-acid polypeptide reads, in one-letter code: Integral membrane protein 2B (266 aa).

Over 1–54 (MVKVTFNSALAQKEAKKXEPKSGEEALIIPPDTXAVDCKDPDEVVPVGQRRAWC) the chain is Cytoplasmic. Residues 55 to 75 (WCMCFGLAFMLAGVILGGAYL) traverse the membrane as a helical; Signal-anchor for type II membrane protein segment. The Lumenal portion of the chain corresponds to 76-266 (YKYFALQPDD…KFAVETLICS (191 aa)). The tract at residues 102–134 (EPPANAPAARYQTIEENIKIFEEDGVEFISVPV) is necessary for interaction with APP and inhibitor effects on APP processing. The BRICHOS domain maps to 137–231 (FADSDPANIV…LCHDKETYKL (95 aa)). Cystine bridges form between Cys164/Cys223 and Cys248/Cys265. Asn170 carries an N-linked (GlcNAc...) asparagine glycan.

This sequence belongs to the ITM2 family. In terms of assembly, homodimer; disulfide-linked. Interacts with SPPL2A and SPPL2B. Interacts with APP. Mature BRI2 (mBRI2) interacts with the APP amyloid-beta A4 protein; the interaction occurs at the cell surface and in the endocytic compartments and enable alpha- and beta-secretase-induced APP cleavage inhibition. Mature BRI2 (mBRI2) interacts with the APP C99; the interaction occurs in the endocytic compartments and enable gamma-secretase-induced C99 cleavage inhibition. May form heterodimers with Bri23 peptide and APP amyloid-beta protein 40. Interacts with ADAM7 in sperm; the interaction increases following capacitation. In terms of processing, the ectodomain C-terminal part of the imBRI2 is processed by furin producing a secreted Bri23 peptide and a mature BRI2, membrane form (mBRI2). The remaining part of the ectodomain of mBRI2 containing the BRICHOS domain is cleaved by ADAM10 and is secreted (BRI2C, soluble form). The membrane-bound N-terminal fragment (BRI2C, membrane form) is further proteolytically processed by SPPL2A and SPPL2B through regulated intramembrane proteolysis producing a secreted C-peptide and a BRI2 intracellular domain (BRI2 ICD) released in the cytosol. Shedding by ADAM10 facilitates intramembrane cleavage but is not absolutely required for BRI2 ICD generation. Post-translationally, glycosylation at Asn-170 is important for cell surface localization, but doesn't affect furin- and ADAM10-induced proteolytic processing.

The protein resides in the golgi apparatus membrane. It is found in the cell membrane. It localises to the endosome membrane. The protein localises to the secreted. Plays a regulatory role in the processing of the amyloid-beta A4 precursor protein (APP) and acts as an inhibitor of the amyloid-beta peptide aggregation and fibrils deposition. Plays a role in the induction of neurite outgrowth. Functions as a protease inhibitor by blocking access of secretases to APP cleavage sites. Functionally, mature BRI2 (mBRI2) functions as a modulator of the amyloid-beta A4 precursor protein (APP) processing leading to a strong reduction in the secretion of secretase-processed amyloid-beta protein 40 and amyloid-beta protein 42. In terms of biological role, bri23 peptide prevents aggregation of APP amyloid-beta protein 42 into toxic oligomers. The protein is Integral membrane protein 2B (ITM2B) of Sus scrofa (Pig).